A 144-amino-acid chain; its full sequence is Large ribosomal subunit protein uL11 (144 aa).

Belongs to the universal ribosomal protein uL11 family. As to quaternary structure, part of the ribosomal stalk of the 50S ribosomal subunit. Interacts with L10 and the large rRNA to form the base of the stalk. L10 forms an elongated spine to which L12 dimers bind in a sequential fashion forming a multimeric L10(L12)X complex. One or more lysine residues are methylated.

Its function is as follows. Forms part of the ribosomal stalk which helps the ribosome interact with GTP-bound translation factors. The polypeptide is Large ribosomal subunit protein uL11 (Granulibacter bethesdensis (strain ATCC BAA-1260 / CGDNIH1)).